A 236-amino-acid polypeptide reads, in one-letter code: uncharacterized protein (236 aa).

The region spanning 3-208 is the DPCK domain; the sequence is ILGLTGSIAT…PSYFFTLLCL (206 aa). An ATP-binding site is contributed by 8–15; that stretch reads GSIATGKS. A phosphoserine mark is found at Ser-82 and Ser-86.

The protein belongs to the CoaE family.

The protein localises to the cytoplasm. This is an uncharacterized protein from Schizosaccharomyces pombe (strain 972 / ATCC 24843) (Fission yeast).